A 239-amino-acid polypeptide reads, in one-letter code: Small ribosomal subunit protein uS2c (239 aa).

This sequence belongs to the universal ribosomal protein uS2 family.

The protein localises to the plastid. This is Small ribosomal subunit protein uS2c (rps2) from Aneura mirabilis (Parasitic liverwort).